We begin with the raw amino-acid sequence, 644 residues long: 3-isopropylmalate dehydratase (644 aa).

[4Fe-4S] cluster contacts are provided by C400, C460, and C463. Residues S521 to M568 are disordered. Residues A537–D547 are compositionally biased toward acidic residues.

This sequence belongs to the aconitase/IPM isomerase family. In terms of assembly, monomer. It depends on [4Fe-4S] cluster as a cofactor.

It catalyses the reaction (2R,3S)-3-isopropylmalate = (2S)-2-isopropylmalate. It participates in amino-acid biosynthesis; L-leucine biosynthesis; L-leucine from 3-methyl-2-oxobutanoate: step 2/4. In terms of biological role, catalyzes the isomerization between 2-isopropylmalate and 3-isopropylmalate, via the formation of 2-isopropylmaleate. The polypeptide is 3-isopropylmalate dehydratase (LEUA) (Mucor circinelloides f. lusitanicus (Mucor racemosus var. lusitanicus)).